The following is a 171-amino-acid chain: 3-hydroxydecanoyl-[acyl-carrier-protein] dehydratase (171 aa).

H70 is a catalytic residue.

The protein belongs to the thioester dehydratase family. FabA subfamily. Homodimer.

It is found in the cytoplasm. It catalyses the reaction a (3R)-hydroxyacyl-[ACP] = a (2E)-enoyl-[ACP] + H2O. It carries out the reaction (3R)-hydroxydecanoyl-[ACP] = (2E)-decenoyl-[ACP] + H2O. The catalysed reaction is (2E)-decenoyl-[ACP] = (3Z)-decenoyl-[ACP]. It participates in lipid metabolism; fatty acid biosynthesis. In terms of biological role, necessary for the introduction of cis unsaturation into fatty acids. Catalyzes the dehydration of (3R)-3-hydroxydecanoyl-ACP to E-(2)-decenoyl-ACP and then its isomerization to Z-(3)-decenoyl-ACP. Can catalyze the dehydratase reaction for beta-hydroxyacyl-ACPs with saturated chain lengths up to 16:0, being most active on intermediate chain length. The chain is 3-hydroxydecanoyl-[acyl-carrier-protein] dehydratase from Mesorhizobium japonicum (strain LMG 29417 / CECT 9101 / MAFF 303099) (Mesorhizobium loti (strain MAFF 303099)).